The primary structure comprises 108 residues: MNNLISKFNKIIYLNATKQTNKINCSFYSTTINNNNNNNNNNNNNNISNKKAEMSKENQQLLQDLEEEFDEDEFKPYVNPITKEIGGPKGPEPTRYNDWERNGRVSDF.

The span at 33 to 46 (NNNNNNNNNNNNNN) shows a compositional bias: low complexity. Disordered stretches follow at residues 33–59 (NNNN…KENQ) and 79–108 (NPIT…VSDF). Positions 95–108 (RYNDWERNGRVSDF) are enriched in basic and acidic residues.

This sequence belongs to the SDHAF4 family. Interacts with SdhA in its FAD-bound form.

The protein resides in the mitochondrion matrix. Functionally, plays an essential role in the assembly of succinate dehydrogenase (SDH), an enzyme complex (also referred to as respiratory complex II) that is a component of both the tricarboxylic acid (TCA) cycle and the mitochondrial electron transport chain, and which couples the oxidation of succinate to fumarate with the reduction of ubiquinone (coenzyme Q) to ubiquinol. Binds to the flavoprotein subunit SdhA in its FAD-bound form, blocking the generation of excess reactive oxygen species (ROS) and facilitating its assembly with the iron-sulfur protein subunit SdhB into the SDH catalytic dimer. The chain is Succinate dehydrogenase assembly factor 4, mitochondrial from Dictyostelium discoideum (Social amoeba).